The primary structure comprises 160 residues: Calsequestrin-2 (160 aa).

This sequence belongs to the calsequestrin family. Monomer, homodimer and homooligomer. Mostly monomeric in the absence of calcium. Forms higher oligomers in a calcium-dependent manner. Dimers associate to form tetramers, that then form linear homomer chains. Interacts with ASPH and TRDN. In terms of processing, phosphorylation in the C-terminus, probably by CK2, moderately increases calcium buffering capacity. Post-translationally, N-glycosylated.

The protein resides in the sarcoplasmic reticulum lumen. Calsequestrin is a high-capacity, moderate affinity, calcium-binding protein and thus acts as an internal calcium store in muscle. Calcium ions are bound by clusters of acidic residues at the protein surface, especially at the interface between subunits. Can bind around 60 Ca(2+) ions. Regulates the release of lumenal Ca(2+) via the calcium release channel RYR2; this plays an important role in triggering muscle contraction. Plays a role in excitation-contraction coupling in the heart and in regulating the rate of heart beats. The sequence is that of Calsequestrin-2 (CASQ2) from Sus scrofa (Pig).